Here is a 95-residue protein sequence, read N- to C-terminus: Acylphosphatase (95 aa).

Residues 5–93 form the Acylphosphatase-like domain; the sequence is RAHLYIKGKV…GEFQDFRILP (89 aa). Residues Arg20 and Asn38 contribute to the active site.

This sequence belongs to the acylphosphatase family.

It carries out the reaction an acyl phosphate + H2O = a carboxylate + phosphate + H(+). The sequence is that of Acylphosphatase (acyP) from Pyrobaculum islandicum (strain DSM 4184 / JCM 9189 / GEO3).